Consider the following 78-residue polypeptide: Small ribosomal subunit protein bS18 (78 aa).

Belongs to the bacterial ribosomal protein bS18 family. As to quaternary structure, part of the 30S ribosomal subunit. Forms a tight heterodimer with protein bS6.

Functionally, binds as a heterodimer with protein bS6 to the central domain of the 16S rRNA, where it helps stabilize the platform of the 30S subunit. This Geobacillus kaustophilus (strain HTA426) protein is Small ribosomal subunit protein bS18.